We begin with the raw amino-acid sequence, 338 residues long: Phenylalanine--tRNA ligase alpha subunit (338 aa).

Residue E252 participates in Mg(2+) binding.

The protein belongs to the class-II aminoacyl-tRNA synthetase family. Phe-tRNA synthetase alpha subunit type 1 subfamily. In terms of assembly, tetramer of two alpha and two beta subunits. It depends on Mg(2+) as a cofactor.

The protein resides in the cytoplasm. It catalyses the reaction tRNA(Phe) + L-phenylalanine + ATP = L-phenylalanyl-tRNA(Phe) + AMP + diphosphate + H(+). The chain is Phenylalanine--tRNA ligase alpha subunit from Mycoplasmoides gallisepticum (strain R(low / passage 15 / clone 2)) (Mycoplasma gallisepticum).